The chain runs to 860 residues: Alanine--tRNA ligase (860 aa).

Zn(2+) is bound by residues histidine 563, histidine 567, cysteine 665, and histidine 669.

The protein belongs to the class-II aminoacyl-tRNA synthetase family. The cofactor is Zn(2+).

Its subcellular location is the cytoplasm. The catalysed reaction is tRNA(Ala) + L-alanine + ATP = L-alanyl-tRNA(Ala) + AMP + diphosphate. Functionally, catalyzes the attachment of alanine to tRNA(Ala) in a two-step reaction: alanine is first activated by ATP to form Ala-AMP and then transferred to the acceptor end of tRNA(Ala). Also edits incorrectly charged Ser-tRNA(Ala) and Gly-tRNA(Ala) via its editing domain. This Vibrio parahaemolyticus serotype O3:K6 (strain RIMD 2210633) protein is Alanine--tRNA ligase.